The primary structure comprises 208 residues: 3-isopropylmalate dehydratase small subunit (208 aa).

It belongs to the LeuD family. LeuD type 1 subfamily. Heterodimer of LeuC and LeuD.

The enzyme catalyses (2R,3S)-3-isopropylmalate = (2S)-2-isopropylmalate. It functions in the pathway amino-acid biosynthesis; L-leucine biosynthesis; L-leucine from 3-methyl-2-oxobutanoate: step 2/4. Functionally, catalyzes the isomerization between 2-isopropylmalate and 3-isopropylmalate, via the formation of 2-isopropylmaleate. This is 3-isopropylmalate dehydratase small subunit from Granulibacter bethesdensis (strain ATCC BAA-1260 / CGDNIH1).